We begin with the raw amino-acid sequence, 290 residues long: GTPase Era (290 aa).

In terms of domain architecture, Era-type G spans 2-169; that stretch reads KSGFVSIIGR…KDKIYENLQE (168 aa). Residues 10–17 form a G1 region; it reads GRPSTGKS. 10 to 17 provides a ligand contact to GTP; it reads GRPSTGKS. The interval 36–40 is G2; sequence QTTRN. The G3 stretch occupies residues 57–60; the sequence is DTPG. GTP-binding positions include 57–61 and 119–122; these read DTPGF and NKID. Positions 119–122 are G4; that stretch reads NKID. A G5 region spans residues 148-150; the sequence is ISA. Residues 200–276 enclose the KH type-2 domain; sequence LKEELPYSLY…DLFLQVKLRK (77 aa).

This sequence belongs to the TRAFAC class TrmE-Era-EngA-EngB-Septin-like GTPase superfamily. Era GTPase family. In terms of assembly, monomer.

The protein localises to the cytoplasm. Its subcellular location is the cell inner membrane. An essential GTPase that binds both GDP and GTP, with rapid nucleotide exchange. Plays a role in 16S rRNA processing and 30S ribosomal subunit biogenesis and possibly also in cell cycle regulation and energy metabolism. In Borrelia turicatae (strain 91E135), this protein is GTPase Era.